Reading from the N-terminus, the 271-residue chain is L-aspartate dehydrogenase (271 aa).

Positions 124 and 192 each coordinate NAD(+). His222 is an active-site residue.

The protein belongs to the L-aspartate dehydrogenase family.

The enzyme catalyses L-aspartate + NADP(+) + H2O = oxaloacetate + NH4(+) + NADPH + H(+). It carries out the reaction L-aspartate + NAD(+) + H2O = oxaloacetate + NH4(+) + NADH + H(+). The protein operates within cofactor biosynthesis; NAD(+) biosynthesis; iminoaspartate from L-aspartate (dehydrogenase route): step 1/1. Its function is as follows. Specifically catalyzes the NAD or NADP-dependent dehydrogenation of L-aspartate to iminoaspartate. The protein is L-aspartate dehydrogenase of Methanococcoides burtonii (strain DSM 6242 / NBRC 107633 / OCM 468 / ACE-M).